The following is a 124-amino-acid chain: Holo-[acyl-carrier-protein] synthase (124 aa).

Mg(2+) contacts are provided by Asp-5 and Glu-51.

The protein belongs to the P-Pant transferase superfamily. AcpS family. Mg(2+) serves as cofactor.

Its subcellular location is the cytoplasm. It carries out the reaction apo-[ACP] + CoA = holo-[ACP] + adenosine 3',5'-bisphosphate + H(+). Transfers the 4'-phosphopantetheine moiety from coenzyme A to a Ser of acyl-carrier-protein. In Hydrogenobaculum sp. (strain Y04AAS1), this protein is Holo-[acyl-carrier-protein] synthase.